The chain runs to 213 residues: Uridine kinase (213 aa).

Residue 15-22 (GASASGKS) participates in ATP binding.

This sequence belongs to the uridine kinase family.

The protein resides in the cytoplasm. The enzyme catalyses uridine + ATP = UMP + ADP + H(+). It carries out the reaction cytidine + ATP = CMP + ADP + H(+). It functions in the pathway pyrimidine metabolism; CTP biosynthesis via salvage pathway; CTP from cytidine: step 1/3. Its pathway is pyrimidine metabolism; UMP biosynthesis via salvage pathway; UMP from uridine: step 1/1. This Salmonella newport (strain SL254) protein is Uridine kinase.